The primary structure comprises 292 residues: Porphobilinogen deaminase (292 aa).

Position 235 is an S-(dipyrrolylmethanemethyl)cysteine (cysteine 235).

Belongs to the HMBS family. As to quaternary structure, monomer. The cofactor is dipyrromethane.

The enzyme catalyses 4 porphobilinogen + H2O = hydroxymethylbilane + 4 NH4(+). It participates in porphyrin-containing compound metabolism; protoporphyrin-IX biosynthesis; coproporphyrinogen-III from 5-aminolevulinate: step 2/4. In terms of biological role, tetrapolymerization of the monopyrrole PBG into the hydroxymethylbilane pre-uroporphyrinogen in several discrete steps. In Acetivibrio thermocellus (strain ATCC 27405 / DSM 1237 / JCM 9322 / NBRC 103400 / NCIMB 10682 / NRRL B-4536 / VPI 7372) (Clostridium thermocellum), this protein is Porphobilinogen deaminase.